We begin with the raw amino-acid sequence, 87 residues long: MKNPTLLPKLTAPVERPAVTSSDLKQASSVDAAWLNGDNNWSTPFAGVNAAWLNGDNNWSTPFAGVNAAWLNGDNNWSTPFAADGAE.

Residues 1-33 (MKNPTLLPKLTAPVERPAVTSSDLKQASSVDAA) constitute a propeptide that is removed on maturation. W34 carries the 3'-prenyl-2',N2-cyclotryptophan; partial lipid modification. A cross-link (cyclopeptide (Trp-Pro)) is located at residues 34–44 (WLNGDNNWSTP). L35 is modified (D-leucine; partial). W41 is lipidated: 3'-prenyl-2',N2-cyclotryptophan; partial. A propeptide spanning residues 45–51 (FAGVNAA) is cleaved from the precursor. Residue W52 is the site of 3'-prenyl-2',N2-cyclotryptophan; partial attachment. The cyclopeptide (Trp-Pro) cross-link spans 52–62 (WLNGDNNWSTP). The residue at position 53 (L53) is a D-leucine; partial. W59 carries 3'-prenyl-2',N2-cyclotryptophan; partial lipidation. Positions 63 to 69 (FAGVNAA) are excised as a propeptide. The 3'-prenyl-2',N2-cyclotryptophan; partial moiety is linked to residue W70. A cross-link (cyclopeptide (Trp-Pro)) is located at residues 70–80 (WLNGDNNWSTP). L71 bears the D-leucine; partial mark. Residue W77 is the site of 3'-prenyl-2',N2-cyclotryptophan; partial attachment. The propeptide occupies 81–87 (FAADGAE).

Kawaguchipeptin A contains a D-Leu and 2 prenylated Trp, whereas kawaguchipeptin B only contains unmodified amino acids. Post-translationally, kawaguchipeptin A is prenylated in vivo. Upon expression in E.coli of the whole operon, Trp residues are prenylated by C-prenyltransferase KgpF. Prenylation by KgpF is likely the last enzymatic step in the biosynthetic maturation of kawaguchipeptin A.

Its function is as follows. Both kawaguchipeptin A and B, which only differ by post-translational modifications, have antibacterial activities, since they inhibit the growth of the Gram-positive bacterium S.aureus at a concentration of 1 ug/mL. The polypeptide is Kawaguchipeptin peptide (Microcystis aeruginosa (strain NIES-88 / KW-MA1-3)).